A 111-amino-acid chain; its full sequence is Large ribosomal subunit protein uL24 (111 aa).

It belongs to the universal ribosomal protein uL24 family. As to quaternary structure, part of the 50S ribosomal subunit.

In terms of biological role, one of two assembly initiator proteins, it binds directly to the 5'-end of the 23S rRNA, where it nucleates assembly of the 50S subunit. One of the proteins that surrounds the polypeptide exit tunnel on the outside of the subunit. This is Large ribosomal subunit protein uL24 from Bifidobacterium longum (strain DJO10A).